The sequence spans 339 residues: Cyclin-Y-like protein 1 (339 aa).

The Cyclin N-terminal domain occupies 181–263 (QLTAECAIVT…FLELLQFNIN (83 aa)).

It belongs to the cyclin family. Cyclin Y subfamily.

The protein resides in the cell membrane. In terms of biological role, key regulator of Wnt signaling implicated in various biological processes such as embryonic neurogenesis. In Danio rerio (Zebrafish), this protein is Cyclin-Y-like protein 1 (ccnyl1).